Here is a 336-residue protein sequence, read N- to C-terminus: Fructose-1,6-bisphosphatase class 1 (336 aa).

Residues glutamate 91, aspartate 114, leucine 116, and aspartate 117 each coordinate Mg(2+). Substrate is bound by residues 117–120 (DGSS), asparagine 210, tyrosine 243, and lysine 273. Glutamate 279 serves as a coordination point for Mg(2+).

This sequence belongs to the FBPase class 1 family. As to quaternary structure, homotetramer. Mg(2+) is required as a cofactor.

The protein resides in the cytoplasm. The enzyme catalyses beta-D-fructose 1,6-bisphosphate + H2O = beta-D-fructose 6-phosphate + phosphate. Its pathway is carbohydrate biosynthesis; gluconeogenesis. This chain is Fructose-1,6-bisphosphatase class 1, found in Dichelobacter nodosus (strain VCS1703A).